We begin with the raw amino-acid sequence, 113 residues long: Protein translation factor SUI1 homolog (113 aa).

Residues 1 to 24 (MSELDSQVPTAFDPFADANAEDSG) are disordered. At Ser-2 the chain carries N-acetylserine.

This sequence belongs to the SUI1 family.

Probably involved in translation. The polypeptide is Protein translation factor SUI1 homolog (Brassica oleracea (Wild cabbage)).